Here is a 427-residue protein sequence, read N- to C-terminus: Peptidase B (427 aa).

Mn(2+)-binding residues include Lys-195 and Asp-200. The active site involves Lys-207. Mn(2+) contacts are provided by Asp-218, Asp-277, and Glu-279. The active site involves Arg-281.

The protein belongs to the peptidase M17 family. As to quaternary structure, homohexamer. The cofactor is Mn(2+).

The protein resides in the cytoplasm. It carries out the reaction Release of an N-terminal amino acid, Xaa, from a peptide or arylamide. Xaa is preferably Glu or Asp but may be other amino acids, including Leu, Met, His, Cys and Gln.. Probably plays an important role in intracellular peptide degradation. This Citrobacter koseri (strain ATCC BAA-895 / CDC 4225-83 / SGSC4696) protein is Peptidase B.